The primary structure comprises 323 residues: Fructose-1,6-bisphosphatase class 1 (323 aa).

Positions 84, 103, 105, and 106 each coordinate Mg(2+). Residues 106–109, Asn-198, and Lys-264 each bind substrate; that span reads DGSS. Glu-270 is a Mg(2+) binding site.

It belongs to the FBPase class 1 family. In terms of assembly, homotetramer. It depends on Mg(2+) as a cofactor.

It localises to the cytoplasm. The catalysed reaction is beta-D-fructose 1,6-bisphosphate + H2O = beta-D-fructose 6-phosphate + phosphate. It functions in the pathway carbohydrate biosynthesis; gluconeogenesis. The sequence is that of Fructose-1,6-bisphosphatase class 1 from Cellvibrio japonicus (strain Ueda107) (Pseudomonas fluorescens subsp. cellulosa).